The primary structure comprises 289 residues: MKEYKDLLKLVLDNGIMQENRTDTDAIAYFGTQSRYDLTKGFPLLTTKKMAYKAIFHELLWFLKGETNIKYLVDNNVKIWNEWPYENYKKSPYFKNESIDEFILKIKEDDSFAKQFGELGPVYGRQWRNFNGVDQITNLIEEIKKNKYSRRLIVSVWNPSEIKNMLLPPCHCLFQFFVNSKNELSCQLYQRSADLFLGVPFNIASYSLLTYMIAQVTNTTAKEFVHTIGVAHIYNNHIDQVKEQLTREPLQLPTLVLNKNIKNIFDFKIEDIEIKDYNSHPAIKGKVAV.

DUMP contacts are provided by residues Arg-21 and Arg-150–Arg-151. Cys-170 (nucleophile) is an active-site residue. DUMP-binding positions include Arg-191–Asp-194, Asn-202, and His-232–Tyr-234. Asp-194 contributes to the (6R)-5,10-methylene-5,6,7,8-tetrahydrofolate binding site. Ala-288 is a (6R)-5,10-methylene-5,6,7,8-tetrahydrofolate binding site.

Belongs to the thymidylate synthase family. Bacterial-type ThyA subfamily. In terms of assembly, homodimer.

It is found in the cytoplasm. It catalyses the reaction dUMP + (6R)-5,10-methylene-5,6,7,8-tetrahydrofolate = 7,8-dihydrofolate + dTMP. Its pathway is pyrimidine metabolism; dTTP biosynthesis. Its function is as follows. Catalyzes the reductive methylation of 2'-deoxyuridine-5'-monophosphate (dUMP) to 2'-deoxythymidine-5'-monophosphate (dTMP) while utilizing 5,10-methylenetetrahydrofolate (mTHF) as the methyl donor and reductant in the reaction, yielding dihydrofolate (DHF) as a by-product. This enzymatic reaction provides an intracellular de novo source of dTMP, an essential precursor for DNA biosynthesis. This Malacoplasma penetrans (strain HF-2) (Mycoplasma penetrans) protein is Thymidylate synthase.